Here is a 220-residue protein sequence, read N- to C-terminus: Large ribosomal subunit protein uL3 (220 aa).

Residues 113 to 143 form a disordered region; the sequence is GTTKGHGYQGNIHKDGQRRGPMAHGSRYHRR.

This sequence belongs to the universal ribosomal protein uL3 family. In terms of assembly, part of the 50S ribosomal subunit. Forms a cluster with proteins L14 and L19.

In terms of biological role, one of the primary rRNA binding proteins, it binds directly near the 3'-end of the 23S rRNA, where it nucleates assembly of the 50S subunit. This is Large ribosomal subunit protein uL3 from Limosilactobacillus fermentum (strain NBRC 3956 / LMG 18251) (Lactobacillus fermentum).